The primary structure comprises 49 residues: uncharacterized protein (49 aa).

This is an uncharacterized protein from Sulfolobus spindle-shape virus 1 (SSV1).